A 1156-amino-acid chain; its full sequence is Chromosome partition protein Smc (1156 aa).

37 to 44 (PNGAGKSN) is an ATP binding site. Residues 167–499 (SGIGEYERKK…AIEREVRSFS (333 aa)) are a coiled coil. The region spanning 509–624 (KGVYGSVSEL…VENFESAKAI (116 aa)) is the SMC hinge domain. Residues 654–1001 (GELNKRYYEE…EETENKKRKV (348 aa)) adopt a coiled-coil conformation.

The protein belongs to the SMC family. As to quaternary structure, homodimer.

The protein localises to the cytoplasm. In terms of biological role, required for chromosome condensation and partitioning. The protein is Chromosome partition protein Smc of Aquifex aeolicus (strain VF5).